The sequence spans 129 residues: Transcription antitermination protein NusB (129 aa).

The protein belongs to the NusB family.

Functionally, involved in transcription antitermination. Required for transcription of ribosomal RNA (rRNA) genes. Binds specifically to the boxA antiterminator sequence of the ribosomal RNA (rrn) operons. In Staphylococcus aureus (strain N315), this protein is Transcription antitermination protein NusB.